The chain runs to 299 residues: tRNA dimethylallyltransferase (299 aa).

ATP is bound at residue 10–17 (GPTAVGKT). Residue 12–17 (TAVGKT) coordinates substrate. Residues 35 to 38 (DSQQ) are interaction with substrate tRNA.

It belongs to the IPP transferase family. As to quaternary structure, monomer. Requires Mg(2+) as cofactor.

The enzyme catalyses adenosine(37) in tRNA + dimethylallyl diphosphate = N(6)-dimethylallyladenosine(37) in tRNA + diphosphate. Catalyzes the transfer of a dimethylallyl group onto the adenine at position 37 in tRNAs that read codons beginning with uridine, leading to the formation of N6-(dimethylallyl)adenosine (i(6)A). The sequence is that of tRNA dimethylallyltransferase from Streptococcus thermophilus (strain CNRZ 1066).